We begin with the raw amino-acid sequence, 161 residues long: Protein ilm1 (161 aa).

Topologically, residues 1-6 (MLFSFR) are cytoplasmic. A helical membrane pass occupies residues 7–27 (AIVLFYCCMLTFAGIGFLWNP). Topologically, residues 28–56 (KFVVESGLVALIGASMEVKPLIVTQDNLS) are lumenal. The helical transmembrane segment at 57 to 77 (TLALSGLVFLILGMIYTISLL) threads the bilayer. Over 78 to 81 (QSNF) the chain is Cytoplasmic. The helical transmembrane segment at 82-102 (LFFSGITPIRAIFDFILTGFI) threads the bilayer. Residues 103 to 112 (YLKKEHIASN) are Lumenal-facing. Residues 113-133 (SLTFTFAFCDLMWQFWMFAAM) traverse the membrane as a helical segment. At 134 to 161 (SEERAKYLKNQKKAEELAARKAREVEES) the chain is on the cytoplasmic side.

Belongs to the ILM1 family.

The protein resides in the endoplasmic reticulum. It is found in the membrane. This chain is Protein ilm1, found in Schizosaccharomyces pombe (strain 972 / ATCC 24843) (Fission yeast).